The primary structure comprises 305 residues: Elongation factor Ts (305 aa).

The tract at residues 79–82 (TDFV) is involved in Mg(2+) ion dislocation from EF-Tu.

This sequence belongs to the EF-Ts family.

The protein localises to the cytoplasm. Associates with the EF-Tu.GDP complex and induces the exchange of GDP to GTP. It remains bound to the aminoacyl-tRNA.EF-Tu.GTP complex up to the GTP hydrolysis stage on the ribosome. The sequence is that of Elongation factor Ts from Brucella anthropi (strain ATCC 49188 / DSM 6882 / CCUG 24695 / JCM 21032 / LMG 3331 / NBRC 15819 / NCTC 12168 / Alc 37) (Ochrobactrum anthropi).